Consider the following 747-residue polypeptide: Catalase-peroxidase (747 aa).

The N-terminal stretch at 1–27 (MRKFSVSKVALLAATMAPALLPAAARA) is a signal peptide. Positions 116-238 (WHSAGTYRTA…LAAVQMGLIY (123 aa)) form a cross-link, tryptophyl-tyrosyl-methioninium (Trp-Tyr) (with M-264). The Proton acceptor role is filled by His-117. A cross-link (tryptophyl-tyrosyl-methioninium (Tyr-Met) (with W-116)) is located at residues 238–264 (YVNPEGPNGNPDPLLAAKDIRETFGRM). His-279 serves as a coordination point for heme b.

It belongs to the peroxidase family. Peroxidase/catalase subfamily. As to quaternary structure, homodimer or homotetramer. Heme b is required as a cofactor. In terms of processing, formation of the three residue Trp-Tyr-Met cross-link is important for the catalase, but not the peroxidase activity of the enzyme.

The enzyme catalyses H2O2 + AH2 = A + 2 H2O. It carries out the reaction 2 H2O2 = O2 + 2 H2O. Its function is as follows. Bifunctional enzyme with both catalase and broad-spectrum peroxidase activity. The protein is Catalase-peroxidase of Novosphingobium aromaticivorans (strain ATCC 700278 / DSM 12444 / CCUG 56034 / CIP 105152 / NBRC 16084 / F199).